We begin with the raw amino-acid sequence, 356 residues long: MTDLTTQEAIVLERPGKITLTNVSIPKISDPNEVIIQIKATGICGSDIHYYTHGRIANYVVESPMVLGHESSGIVALIGENVKTLKVGDRVALEPGIPDRFSPEMKEGRYNLDPNLKFAATPPFDGTLTKYYKTMKDFVYKLPDDVSFEEGALIEPLSVAIHANKLAKIKFGARCVVFGAGPIGLLAGKVASVFGAADVVFVDLLENKLETARQFGATHIVNSGDLPHGVTVDSVIKKAIGKKGADVVFECSGAEPCVRAGIEVCKAGGTIVQVGMGQEEIQFPISIIPTKELTFQGCFRYCQGDYSDSIELVSSRKLSLKPFITHRYSFKDAVEAFEETSHHPLNNIKTIIEGPE.

Residues cysteine 44, histidine 69, and glutamate 155 each contribute to the Zn(2+) site. NAD(+) is bound at residue 179–184 (GAGPIG).

This sequence belongs to the zinc-containing alcohol dehydrogenase family. Zn(2+) is required as a cofactor.

The enzyme catalyses xylitol + NAD(+) = D-xylulose + NADH + H(+). The protein operates within carbohydrate degradation; L-arabinose degradation via L-arabinitol; D-xylulose 5-phosphate from L-arabinose (fungal route): step 4/5. In Saccharomyces cerevisiae (strain ATCC 204508 / S288c) (Baker's yeast), this protein is D-xylulose reductase (XYL2).